A 388-amino-acid polypeptide reads, in one-letter code: MATPLFHADLTVHTQSHDYPIVITENTATENAIAEESSMASQVAPYIAGQQVLIVTNETIAPLYLKALKQPLEVQFTVQVCVLPDGEQYKNQSSINQIYDVLMAAHFNRDVTLIALGGGVIGDMTGFSAASFMRGVNFIQIPTTLLSQVDSSVGGKTGINHPQGKNMIGAFWQPQMVLADMSTLKTLPARELSAGLAEVIKYALIMDADFLTWLEHNLPAMMALNLVILGEAVKRCCEYKADIVAQDERESGVRALLNFGHTFGHVIETHEGYGNWLHGEAVAAGMVQAAELSQKIGWLTSDEVARVKRVLLLANLPITPPPIAVQTALNLMGHDKKVKHGQIRLILLKSLGEAVLTNDFDPDLLTDVLSQHAIHAKDDAQATTATVL.

Residues 85–90 (DGEQYK), 119–123 (GVIGD), 143–144 (TT), K156, K165, and 183–186 (TLKT) each bind NAD(+). Zn(2+) contacts are provided by E198, H261, and H278.

It belongs to the sugar phosphate cyclases superfamily. Dehydroquinate synthase family. It depends on Co(2+) as a cofactor. Zn(2+) is required as a cofactor. Requires NAD(+) as cofactor.

The protein resides in the cytoplasm. The catalysed reaction is 7-phospho-2-dehydro-3-deoxy-D-arabino-heptonate = 3-dehydroquinate + phosphate. The protein operates within metabolic intermediate biosynthesis; chorismate biosynthesis; chorismate from D-erythrose 4-phosphate and phosphoenolpyruvate: step 2/7. Its function is as follows. Catalyzes the conversion of 3-deoxy-D-arabino-heptulosonate 7-phosphate (DAHP) to dehydroquinate (DHQ). This Psychrobacter arcticus (strain DSM 17307 / VKM B-2377 / 273-4) protein is 3-dehydroquinate synthase.